Here is a 203-residue protein sequence, read N- to C-terminus: Ribosomal RNA large subunit methyltransferase E (203 aa).

Residues Gly-59, Trp-61, Asp-79, Asn-95, and Asp-118 each contribute to the S-adenosyl-L-methionine site. Lys-158 acts as the Proton acceptor in catalysis.

This sequence belongs to the class I-like SAM-binding methyltransferase superfamily. RNA methyltransferase RlmE family.

The protein localises to the cytoplasm. It catalyses the reaction uridine(2552) in 23S rRNA + S-adenosyl-L-methionine = 2'-O-methyluridine(2552) in 23S rRNA + S-adenosyl-L-homocysteine + H(+). Its function is as follows. Specifically methylates the uridine in position 2552 of 23S rRNA at the 2'-O position of the ribose in the fully assembled 50S ribosomal subunit. The polypeptide is Ribosomal RNA large subunit methyltransferase E (Wigglesworthia glossinidia brevipalpis).